Consider the following 700-residue polypeptide: Myotubularin-related protein 11 (700 aa).

Positions 1–39 (MWWGGRGQSFNIAPQKEEPEMGLSGPKSNPGNRMPEPSS) are disordered. A Myotubularin phosphatase domain is found at 201–644 (LETLEDWETE…PQIRFWKRCY (444 aa)).

Belongs to the protein-tyrosine phosphatase family. Non-receptor class myotubularin subfamily.

This Mus musculus (Mouse) protein is Myotubularin-related protein 11 (Mtmr11).